The primary structure comprises 230 residues: PKHD-type hydroxylase XF_0598 (230 aa).

The 105-residue stretch at 78-182 folds into the Fe2OG dioxygenase domain; it reads RTLPPRFNCY…RIASFFWVQS (105 aa). H96, D98, and H163 together coordinate Fe cation. R173 is a binding site for 2-oxoglutarate.

Fe(2+) is required as a cofactor. Requires L-ascorbate as cofactor.

This Xylella fastidiosa (strain 9a5c) protein is PKHD-type hydroxylase XF_0598.